The primary structure comprises 106 residues: Flagellar transcriptional regulator FlhD (106 aa).

Belongs to the FlhD family. Homodimer; disulfide-linked. Forms a heterohexamer composed of two FlhC and four FlhD subunits. Each FlhC binds a FlhD dimer, forming a heterotrimer, and a hexamer assembles by dimerization of two heterotrimers.

The protein resides in the cytoplasm. Functions in complex with FlhC as a master transcriptional regulator that regulates transcription of several flagellar and non-flagellar operons by binding to their promoter region. Activates expression of class 2 flagellar genes, including fliA, which is a flagellum-specific sigma factor that turns on the class 3 genes. Also regulates genes whose products function in a variety of physiological pathways. This Burkholderia pseudomallei (strain 1710b) protein is Flagellar transcriptional regulator FlhD.